The following is a 404-amino-acid chain: MDRTQSPKTALFAVLATLLVLTVNGQSLCNTHRFTNNLAFADCSDLSALGSFLHWTYNEQNGTVSIAYRHPGTSASSWVAWGLNPSSTQMVGTQALVAFTNTTTNQFQAYTSSVSSYGTRLERSSLSFGVSGLSATLVSGEVTIFATLELSPNLITANQLWQVGPVVNGVPASHQTSGDNMRSSGRIDFRTGQASAGGGGSGDRLRKRNTHGVLNAVSWGVLMPMGAMMARYMKVFADPTWFYLHIAFQVSGYVIGVAGWATGIKLGNDSPGTSYSTHRNLGIALFTFATLQVFALLVRPKPDHKYRTYWNVYHHTVGYTTIILSIVNIFKGFDILDPEDKWRWAYIGILIFLGACVLILEPLTWFIVLRRKSRGGNTVAAPTSSKYSNGVNGTTTTGPHHQDA.

A signal peptide spans Met1–Gly25. The 116-residue stretch at Leu49–Gly164 folds into the DOMON domain. The Cytochrome b561 domain occupies Val170–Leu369. Residues Ala172 to Lys207 form a disordered region. The segment covering Ser173–Ser183 has biased composition (polar residues). The next 2 membrane-spanning stretches (helical) occupy residues Thr210 to Ala230 and Trp241 to Ala261. Residues His211, His245, and His278 each coordinate heme b. The chain crosses the membrane as a helical span at residues Asn280 to Pro300. His314 contributes to the heme b binding site. 2 helical membrane-spanning segments follow: residues Thr316–Leu336 and Ile349–Leu369. The segment at Gly376–Ala404 is disordered. Over residues Ala380 to Ala404 the composition is skewed to polar residues.

The cofactor is heme b.

Its subcellular location is the membrane. Functionally, may act as a catecholamine-responsive trans-membrane electron transporter. The polypeptide is Cytochrome b561 and DOMON domain-containing protein At5g35735 (Arabidopsis thaliana (Mouse-ear cress)).